A 157-amino-acid chain; its full sequence is Small ribosomal subunit protein uS7 (157 aa).

Belongs to the universal ribosomal protein uS7 family. As to quaternary structure, part of the 30S ribosomal subunit. Contacts proteins S9 and S11.

Its function is as follows. One of the primary rRNA binding proteins, it binds directly to 16S rRNA where it nucleates assembly of the head domain of the 30S subunit. Is located at the subunit interface close to the decoding center, probably blocks exit of the E-site tRNA. This is Small ribosomal subunit protein uS7 from Herpetosiphon aurantiacus (strain ATCC 23779 / DSM 785 / 114-95).